The following is a 750-amino-acid chain: Photosystem I P700 chlorophyll a apoprotein A1 (750 aa).

The next 8 helical transmembrane spans lie at 70-93 (VFSA…FHGA), 156-179 (LYCT…FHYH), 195-219 (LNHH…HVSL), 291-309 (IAHH…GHMY), 346-369 (WHAQ…HHMY), 385-411 (LSLF…IFMV), 433-455 (AIIS…LYIH), and 531-549 (FLVH…LILL). [4Fe-4S] cluster is bound by residues cysteine 573 and cysteine 582. Helical transmembrane passes span 589-610 (HVFL…HFSW) and 664-686 (LSAY…MFLF). Histidine 675 is a binding site for chlorophyll a'. Methionine 683 and tyrosine 691 together coordinate chlorophyll a. Residue tryptophan 692 participates in phylloquinone binding. A helical membrane pass occupies residues 724-744 (AVGVTHYLLGGIATTWAFFLA).

Belongs to the PsaA/PsaB family. As to quaternary structure, the PsaA/B heterodimer binds the P700 chlorophyll special pair and subsequent electron acceptors. PSI consists of a core antenna complex that captures photons, and an electron transfer chain that converts photonic excitation into a charge separation. The eukaryotic PSI reaction center is composed of at least 11 subunits. The cofactor is P700 is a chlorophyll a/chlorophyll a' dimer, A0 is one or more chlorophyll a, A1 is one or both phylloquinones and FX is a shared 4Fe-4S iron-sulfur center..

The protein localises to the plastid. It is found in the chloroplast thylakoid membrane. It carries out the reaction reduced [plastocyanin] + hnu + oxidized [2Fe-2S]-[ferredoxin] = oxidized [plastocyanin] + reduced [2Fe-2S]-[ferredoxin]. PsaA and PsaB bind P700, the primary electron donor of photosystem I (PSI), as well as the electron acceptors A0, A1 and FX. PSI is a plastocyanin-ferredoxin oxidoreductase, converting photonic excitation into a charge separation, which transfers an electron from the donor P700 chlorophyll pair to the spectroscopically characterized acceptors A0, A1, FX, FA and FB in turn. Oxidized P700 is reduced on the lumenal side of the thylakoid membrane by plastocyanin. This is Photosystem I P700 chlorophyll a apoprotein A1 from Arabis hirsuta (Hairy rock-cress).